The sequence spans 132 residues: uncharacterized protein (132 aa).

Residues 17 to 75 form a disordered region; sequence RSAVPRWPHLSSQSGVEPPDRWTGTPGWPSRDQEAPGSMMPPAAAQPSAHGALVPPATA. Over residues 51 to 65 the composition is skewed to low complexity; sequence APGSMMPPAAAQPSA.

As to expression, expressed exclusively in heart.

Its subcellular location is the cytoplasm. This is an uncharacterized protein from Homo sapiens (Human).